The following is a 152-amino-acid chain: Deoxyuridine 5'-triphosphate nucleotidohydrolase (152 aa).

Substrate contacts are provided by residues 71 to 73, Asn84, 88 to 90, and Met98; these read RSG and LVD.

This sequence belongs to the dUTPase family. Requires Mg(2+) as cofactor.

The catalysed reaction is dUTP + H2O = dUMP + diphosphate + H(+). The protein operates within pyrimidine metabolism; dUMP biosynthesis; dUMP from dCTP (dUTP route): step 2/2. Functionally, this enzyme is involved in nucleotide metabolism: it produces dUMP, the immediate precursor of thymidine nucleotides and it decreases the intracellular concentration of dUTP so that uracil cannot be incorporated into DNA. The polypeptide is Deoxyuridine 5'-triphosphate nucleotidohydrolase (Shewanella oneidensis (strain ATCC 700550 / JCM 31522 / CIP 106686 / LMG 19005 / NCIMB 14063 / MR-1)).